We begin with the raw amino-acid sequence, 440 residues long: Thymidine phosphorylase (440 aa).

The protein belongs to the thymidine/pyrimidine-nucleoside phosphorylase family. As to quaternary structure, homodimer.

It carries out the reaction thymidine + phosphate = 2-deoxy-alpha-D-ribose 1-phosphate + thymine. Its pathway is pyrimidine metabolism; dTMP biosynthesis via salvage pathway; dTMP from thymine: step 1/2. Its function is as follows. The enzymes which catalyze the reversible phosphorolysis of pyrimidine nucleosides are involved in the degradation of these compounds and in their utilization as carbon and energy sources, or in the rescue of pyrimidine bases for nucleotide synthesis. This chain is Thymidine phosphorylase, found in Escherichia coli (strain K12 / DH10B).